Here is a 477-residue protein sequence, read N- to C-terminus: Aspartyl/glutamyl-tRNA(Asn/Gln) amidotransferase subunit B (477 aa).

It belongs to the GatB/GatE family. GatB subfamily. In terms of assembly, heterotrimer of A, B and C subunits.

It carries out the reaction L-glutamyl-tRNA(Gln) + L-glutamine + ATP + H2O = L-glutaminyl-tRNA(Gln) + L-glutamate + ADP + phosphate + H(+). It catalyses the reaction L-aspartyl-tRNA(Asn) + L-glutamine + ATP + H2O = L-asparaginyl-tRNA(Asn) + L-glutamate + ADP + phosphate + 2 H(+). In terms of biological role, allows the formation of correctly charged Asn-tRNA(Asn) or Gln-tRNA(Gln) through the transamidation of misacylated Asp-tRNA(Asn) or Glu-tRNA(Gln) in organisms which lack either or both of asparaginyl-tRNA or glutaminyl-tRNA synthetases. The reaction takes place in the presence of glutamine and ATP through an activated phospho-Asp-tRNA(Asn) or phospho-Glu-tRNA(Gln). This chain is Aspartyl/glutamyl-tRNA(Asn/Gln) amidotransferase subunit B, found in Lactococcus lactis subsp. cremoris (strain SK11).